The following is an 854-amino-acid chain: Nucleolar MIF4G domain-containing protein 1 (854 aa).

The necessary for nucleolar localization and for targeting PPP1CA to the nucleolus stretch occupies residues 2–275 (PRNVPEVNGV…EEDPDWQVLQ (274 aa)). Position 60 is a phosphoserine (serine 60). Disordered stretches follow at residues 66-215 (ESRS…PLSF) and 231-333 (SGGG…GEKY). Basic residues predominate over residues 76–99 (PGGRKSRKELRKEKRHLRKARRLQ). The span at 104 to 113 (SGSGDQGGNV) shows a compositional bias: gly residues. Over residues 128–173 (VRPTPAKATATPAKASAPSTNTKASAAQPKAKAKGAPGKPGPATAT) the composition is skewed to low complexity. Over residues 188–197 (REIRKLERCL) the composition is skewed to basic and acidic residues. Acidic residues predominate over residues 265–280 (SEEDPDWQVLQEDQED). Basic and acidic residues-rich tracts occupy residues 281-291 (VNSKRRGEAES), 303-315 (RFAE…RSSS), and 322-331 (QESHSVESGE). The Required for efficient binding to PPP1CA and for targeting PPP1CA to the nucleolus signature appears at 301–304 (KVRF). Serine 311, serine 314, and serine 315 each carry phosphoserine. The 198-residue stretch at 356–553 (KKHVKGLINR…ETMLALKNND (198 aa)) folds into the MIF4G domain. In terms of domain architecture, MI spans 648-764 (DVRRIIFCTL…PLSVLKVVEF (117 aa)).

This sequence belongs to the CWC22 family. As to quaternary structure, may interact with EIF4A1, EIF4A2 and EIF4A3. Interacts with PPP1CA and PPP1CC.

It localises to the nucleus. The protein resides in the nucleolus. Its function is as follows. Plays a role in targeting PPP1CA to the nucleolus. This chain is Nucleolar MIF4G domain-containing protein 1 (Nom1), found in Mus musculus (Mouse).